Consider the following 178-residue polypeptide: Probable chorismate pyruvate-lyase (178 aa).

Substrate-binding residues include methionine 37, arginine 78, leucine 114, and glutamate 165.

It belongs to the UbiC family.

The protein resides in the cytoplasm. It catalyses the reaction chorismate = 4-hydroxybenzoate + pyruvate. Its pathway is cofactor biosynthesis; ubiquinone biosynthesis. In terms of biological role, removes the pyruvyl group from chorismate, with concomitant aromatization of the ring, to provide 4-hydroxybenzoate (4HB) for the ubiquinone pathway. This is Probable chorismate pyruvate-lyase from Aeromonas salmonicida (strain A449).